We begin with the raw amino-acid sequence, 1218 residues long: Probable RNA-dependent RNA polymerase SHL2 (1218 aa).

This sequence belongs to the RdRP family.

It catalyses the reaction RNA(n) + a ribonucleoside 5'-triphosphate = RNA(n+1) + diphosphate. Its function is as follows. Involved in the RNA silencing pathway. Probably required for the generation of small interfering RNAs (siRNAs). Regulates shoot apical meristem (SAM) initiation and maintenance and leaf polarization through the trans-acting siRNAS (ta-siRNAs) pathway which probably modulates the expression of the ARF2, ARF3, ARF4, ARF14 and ARF15 genes. This chain is Probable RNA-dependent RNA polymerase SHL2 (SHL2), found in Oryza sativa subsp. japonica (Rice).